Reading from the N-terminus, the 78-residue chain is UPF0335 protein A1C_00850 (78 aa).

The protein belongs to the UPF0335 family.

The polypeptide is UPF0335 protein A1C_00850 (Rickettsia akari (strain Hartford)).